The following is a 200-amino-acid chain: Cytochrome c biogenesis ATP-binding export protein CcmA (200 aa).

The ABC transporter domain maps to 3–200 (LSGRGLRCVR…AREMRIGAAA (198 aa)). 35-42 (GHNGAGKT) contributes to the ATP binding site.

The protein belongs to the ABC transporter superfamily. CcmA exporter (TC 3.A.1.107) family. The complex is composed of two ATP-binding proteins (CcmA) and two transmembrane proteins (CcmB).

The protein localises to the cell inner membrane. It carries out the reaction heme b(in) + ATP + H2O = heme b(out) + ADP + phosphate + H(+). In terms of biological role, part of the ABC transporter complex CcmAB involved in the biogenesis of c-type cytochromes; once thought to export heme, this seems not to be the case, but its exact role is uncertain. Responsible for energy coupling to the transport system. The polypeptide is Cytochrome c biogenesis ATP-binding export protein CcmA (Rhodopseudomonas palustris (strain BisB5)).